An 872-amino-acid polypeptide reads, in one-letter code: Alanine--tRNA ligase (872 aa).

The Zn(2+) site is built by His-567, His-571, Cys-669, and His-673.

Belongs to the class-II aminoacyl-tRNA synthetase family. The cofactor is Zn(2+).

The protein resides in the cytoplasm. The catalysed reaction is tRNA(Ala) + L-alanine + ATP = L-alanyl-tRNA(Ala) + AMP + diphosphate. Its function is as follows. Catalyzes the attachment of alanine to tRNA(Ala) in a two-step reaction: alanine is first activated by ATP to form Ala-AMP and then transferred to the acceptor end of tRNA(Ala). Also edits incorrectly charged Ser-tRNA(Ala) and Gly-tRNA(Ala) via its editing domain. The polypeptide is Alanine--tRNA ligase (Streptococcus pyogenes serotype M4 (strain MGAS10750)).